The primary structure comprises 471 residues: Uronate isomerase (471 aa).

Belongs to the metallo-dependent hydrolases superfamily. Uronate isomerase family.

It catalyses the reaction D-glucuronate = D-fructuronate. It carries out the reaction aldehydo-D-galacturonate = keto-D-tagaturonate. The protein operates within carbohydrate metabolism; pentose and glucuronate interconversion. This is Uronate isomerase from Xanthomonas campestris pv. campestris (strain B100).